Consider the following 63-residue polypeptide: MNFYKVFIFVALILAISLGQSEAGWLKKIGKKIERVGQHTRDATIQGLGIAQQAANVAATARG.

The first 23 residues, 1–23 (MNFYKVFIFVALILAISLGQSEA), serve as a signal peptide directing secretion. Arginine 62 carries the post-translational modification Arginine amide.

The protein belongs to the cecropin family.

Its subcellular location is the secreted. Cecropins have lytic and antibacterial activity against several Gram-positive and Gram-negative bacteria. This is Cecropin-2 (Cec2A) from Drosophila virilis (Fruit fly).